Consider the following 2285-residue polypeptide: AT-rich interactive domain-containing protein 1A (2285 aa).

Residues 1 to 14 (MAAQVAPAAASSLG) show a composition bias toward low complexity. Disordered stretches follow at residues 1–820 (MAAQ…ALPN) and 978–1005 (ATKMNNKADGTPKTESKSKKSSSSTTTN). An N-acetylalanine modification is found at Ala-2. The segment covering 23–35 (ELKKAEQQQREEA) has biased composition (basic and acidic residues). A phosphoserine mark is found at Ser-58 and Ser-79. Composition is skewed to gly residues over residues 79–95 (SNGGGGGGGAGSGGGPG) and 121–130 (PGGGGGGSSD). Composition is skewed to low complexity over residues 131–142 (GVGAPPHSAAAA), 212–221 (YNSYYPNRSA), and 228–265 (AYALSSPRGGTPGSGAAAAAGSKPPPSSSASASSSSSS). Ser-233 is subject to Phosphoserine. Gly residues predominate over residues 273–286 (AMGGGGPSAAGGGT). Thr-286 carries the phosphothreonine modification. The LXXLL motif lies at 295 to 299 (LNQLL). Residues 295-306 (LNQLLTSPSSAR) are compositionally biased toward polar residues. Ser-301 bears the Phosphoserine mark. Gly residues predominate over residues 310 to 327 (GYPGGDYSGGPQDGGAGK). Low complexity predominate over residues 338–353 (GAAAAAAAAAAASGGA). Phosphoserine occurs at positions 363 and 382. Positions 400–425 (PYSQQQGPPSGPQQGHGYPGQPYGSQ) are enriched in low complexity. Asymmetric dimethylarginine is present on Arg-429. Low complexity-rich tracts occupy residues 447 to 457 (YTQQIPPYGQQ), 465 to 546 (QGQT…QHPQ), and 553 to 595 (QPQA…YSQQ). Residue Ser-604 is modified to Phosphoserine. The span at 610–621 (SQASSAPSMTSS) shows a compositional bias: low complexity. Over residues 628 to 637 (MNLSLQSRPS) the composition is skewed to polar residues. Residues 658 to 674 (SPGVSTSGISSSQGEQS) show a composition bias toward low complexity. Residues 675–685 (NPAQSPFSPHT) show a composition bias toward polar residues. A phosphoserine mark is found at Ser-696, Ser-698, Ser-702, Ser-730, Ser-764, and Ser-772. Composition is skewed to polar residues over residues 730-747 (SGQSDSIMHPSMNQSSIA) and 755-793 (RNPQMPQYSSPQPGSALSPRQPSGGQIHTGMGSYQQNSM). A compositionally biased stretch (gly residues) spans 797–807 (GPQGGQYGPQG). A compositionally biased stretch (low complexity) spans 808-820 (GYPRQPNYNALPN). The region spanning 1017 to 1108 (EPERKMWVDR…CLYAFECKIE (92 aa)) is the ARID domain. 2 disordered regions span residues 1113-1483 (PPPD…MMGG) and 1539-1603 (ANHE…SPSK). Low complexity predominate over residues 1141 to 1154 (MQGPQTPQSTSSSM). A compositionally biased stretch (pro residues) spans 1162–1177 (PPTPASTPHSQIPPLP). Position 1184 is a phosphoserine (Ser-1184). Residues 1194-1219 (GSDSTFQKRNSMTPNPGYQPSMNTSD) show a composition bias toward polar residues. Ser-1235 bears the Phosphoserine mark. Arg-1276 is subject to Omega-N-methylarginine. Polar residues-rich tracts occupy residues 1299-1315 (NMSTGAPQPNLMPSNPD) and 1339-1356 (YGNQFSTQGTPSGSPFPS). Residues 1357–1367 (QQTTMYQQQQQ) show a composition bias toward low complexity. Residues 1368–1387 (NYKRPMDGTYGPPAKRHEGE) carry the Nuclear localization signal motif. Residues 1396-1425 (GQGQPQQQQLPPAQPQPASQQQAAQPSPQQ) show a composition bias toward low complexity. The segment covering 1468–1477 (PGTNAQQNMP) has biased composition (polar residues). The span at 1554–1577 (PYGPSAPVPPMTRPPPSNYQPPPS) shows a compositional bias: pro residues. Ser-1604 is modified (phosphoserine). Position 1612 is an N6-acetyllysine (Lys-1612). Residues 1709–1713 (LPGLL) carry the LXXLL motif. Disordered stretches follow at residues 1747 to 1774 (PGRFSKVSSPAPMEGGEEEEELLGPKLE) and 1859 to 1907 (FESK…EKRI). 2 positions are modified to phosphoserine: Ser-1751 and Ser-1754. Acidic residues predominate over residues 1761–1774 (GGEEEEELLGPKLE). Over residues 1886–1895 (EGTPGTTDQE) the composition is skewed to low complexity. Thr-1888 carries the post-translational modification Phosphothreonine. Lys-1905 bears the N6-acetyllysine mark. 2 positions are modified to phosphoserine: Ser-1929 and Ser-1944. 2 consecutive short sequence motifs (LXXLL) follow at residues 1967–1971 (LCTLL) and 2085–2089 (LDGLL).

Component of SWI/SNF chromatin remodeling complexes, in some of which it can be mutually exclusive with ARID1B/BAF250B. The canonical complex contains a catalytic subunit (either SMARCA4/BRG1/BAF190A or SMARCA2/BRM/BAF190B) and at least SMARCE1, ACTL6A/BAF53, SMARCC1/BAF155, SMARCC2/BAF170, and SMARCB1/SNF5/BAF47. Other subunits specific to each of the complexes may also be present permitting several possible combinations developmentally and tissue specific. Component of the BAF (SWI/SNF-A) complex, which includes at least actin (ACTB), ARID1A/BAF250A, ARID1B/BAF250B, SMARCA2/BRM, SMARCA4/BRG1/BAF190A, ACTL6A/BAF53, ACTL6B/BAF53B, SMARCE1/BAF57, SMARCC1/BAF155, SMARCC2/BAF170, SMARCB1/SNF5/INI1, and one or more SMARCD1/BAF60A, SMARCD2/BAF60B, or SMARCD3/BAF60C. In muscle cells, the BAF complex also contains DPF3. Component of neural progenitors-specific chromatin remodeling complex (npBAF complex) composed of at least, ARID1A/BAF250A or ARID1B/BAF250B, SMARCD1/BAF60A, SMARCD3/BAF60C, SMARCA2/BRM/BAF190B, SMARCA4/BRG1/BAF190A, SMARCB1/BAF47, SMARCC1/BAF155, SMARCE1/BAF57, SMARCC2/BAF170, PHF10/BAF45A, ACTL6A/BAF53A and actin. Component of neuron-specific chromatin remodeling complex (nBAF complex) composed of at least, ARID1A/BAF250A or ARID1B/BAF250B, SMARCD1/BAF60A, SMARCD3/BAF60C, SMARCA2/BRM/BAF190B, SMARCA4/BRG1/BAF190A, SMARCB1/BAF47, SMARCC1/BAF155, SMARCE1/BAF57, SMARCC2/BAF170, DPF1/BAF45B, DPF3/BAF45C, ACTL6B/BAF53B and actin. Component of a SWI/SNF-like EBAFa complex, at least composed of SMARCA4/BRG1/BAF190A, SMARCB1/BAF47/SNF5, ACTL6A/BAF53A, SMARCE1/BAF57, SMARCD1/BAF60A, SMARCC1/BAF155, SMARCC2/BAF170, BAF250A and MLLT1/ENL. Interacts through its C-terminus with SMARCA2/BRM/BAF190B and SMARCA4/BRG1/BAF190A. Interacts with SMARCC1/BAF155. Interacts with FOS, FOSB isoform 1 and 2, FOSL1 and FOSL2. As to expression, highly expressed in spleen, thymus, prostate, testis, ovary, small intestine, colon, and PBL, and at a much lower level in heart, brain, placenta, lung, liver, skeletal muscle, kidney, and pancreas.

It is found in the nucleus. Functionally, involved in transcriptional activation and repression of select genes by chromatin remodeling (alteration of DNA-nucleosome topology). Component of SWI/SNF chromatin remodeling complexes that carry out key enzymatic activities, changing chromatin structure by altering DNA-histone contacts within a nucleosome in an ATP-dependent manner. Binds DNA non-specifically. Belongs to the neural progenitors-specific chromatin remodeling complex (npBAF complex) and the neuron-specific chromatin remodeling complex (nBAF complex). During neural development a switch from a stem/progenitor to a postmitotic chromatin remodeling mechanism occurs as neurons exit the cell cycle and become committed to their adult state. The transition from proliferating neural stem/progenitor cells to postmitotic neurons requires a switch in subunit composition of the npBAF and nBAF complexes. As neural progenitors exit mitosis and differentiate into neurons, npBAF complexes which contain ACTL6A/BAF53A and PHF10/BAF45A, are exchanged for homologous alternative ACTL6B/BAF53B and DPF1/BAF45B or DPF3/BAF45C subunits in neuron-specific complexes (nBAF). The npBAF complex is essential for the self-renewal/proliferative capacity of the multipotent neural stem cells. The nBAF complex along with CREST plays a role regulating the activity of genes essential for dendrite growth. The chain is AT-rich interactive domain-containing protein 1A (ARID1A) from Homo sapiens (Human).